The primary structure comprises 343 residues: Thromboxane A2 receptor (343 aa).

At 1-29 (MWPNGSSLGPCFRPTNITLEERRLIASPW) the chain is on the extracellular side. Residues asparagine 4 and asparagine 16 are each glycosylated (N-linked (GlcNAc...) asparagine). The chain crosses the membrane as a helical span at residues 30–52 (FAASFCVVGLASNLLALSVLAGA). The Cytoplasmic portion of the chain corresponds to 53–66 (RQGGSHTRSSFLTF). A helical transmembrane segment spans residues 67–87 (LCGLVLTDFLGLLVTGAIVVS). At 88-106 (QHAALFEWHAVDPGCRLCR) the chain is on the extracellular side. Residues cysteine 105 and cysteine 183 are joined by a disulfide bond. A helical transmembrane segment spans residues 107 to 128 (FMGVVMIFFGLSPLLLGATMAS). Residues 129-149 (ERFLGITRPFSRPVVTSQRRA) lie on the Cytoplasmic side of the membrane. A helical membrane pass occupies residues 150–172 (WATVGLVWAAALALGLLPLLGLG). The Extracellular segment spans residues 173–193 (RYTVQYPGSWCFLTLGAESGD). Residues 194–219 (VAFGLLFSMLGGLSVGLSFLLNTVSV) form a helical membrane-spanning segment. At 220-246 (ATLCHVYHGQEAAQQRPRDSEVEMMAQ) the chain is on the cytoplasmic side. A helical transmembrane segment spans residues 247 to 270 (LLGIMLVASVCWLPLLVFIAQTVL). The Extracellular portion of the chain corresponds to 271–289 (RNPPAMSPSGQLSRATEQE). A helical transmembrane segment spans residues 290–311 (LLIYLRVATWNQILDPWVYILF). The Cytoplasmic portion of the chain corresponds to 312 to 343 (RRAVLRRLQPRLSTRPRSLSLQPQLTQRSGLQ). Residues serine 329 and serine 331 each carry the phosphoserine modification.

Belongs to the G-protein coupled receptor 1 family. As to quaternary structure, interacts with RPGRIP1L. Interacts with RACK1; the interaction regulates TBXA2R cell surface expression.

The protein localises to the cell membrane. Functionally, receptor for thromboxane A2 (TXA2), a potent stimulator of platelet aggregation. The activity of this receptor is mediated by a G-protein that activates a phosphatidylinositol-calcium second messenger system. In the kidney, the binding of TXA2 to glomerular TP receptors causes intense vasoconstriction. Activates phospholipase C and adenylyl cyclase. This is Thromboxane A2 receptor (TBXA2R) from Chlorocebus aethiops (Green monkey).